Here is a 202-residue protein sequence, read N- to C-terminus: GMP synthase [glutamine-hydrolyzing] subunit A (202 aa).

The Glutamine amidotransferase type-1 domain occupies 4 to 194 (KIYVVDNGGQ…IAICQQHKEK (191 aa)). C81 (nucleophile) is an active-site residue. Residues H168 and E170 contribute to the active site.

Heterodimer composed of a glutamine amidotransferase subunit (A) and a GMP-binding subunit (B).

It catalyses the reaction XMP + L-glutamine + ATP + H2O = GMP + L-glutamate + AMP + diphosphate + 2 H(+). Its pathway is purine metabolism; GMP biosynthesis; GMP from XMP (L-Gln route): step 1/1. Catalyzes the synthesis of GMP from XMP. The sequence is that of GMP synthase [glutamine-hydrolyzing] subunit A from Thermoplasma volcanium (strain ATCC 51530 / DSM 4299 / JCM 9571 / NBRC 15438 / GSS1).